The sequence spans 252 residues: 2-succinyl-6-hydroxy-2,4-cyclohexadiene-1-carboxylate synthase (252 aa).

It belongs to the AB hydrolase superfamily. MenH family. As to quaternary structure, monomer.

The catalysed reaction is 5-enolpyruvoyl-6-hydroxy-2-succinyl-cyclohex-3-ene-1-carboxylate = (1R,6R)-6-hydroxy-2-succinyl-cyclohexa-2,4-diene-1-carboxylate + pyruvate. It participates in quinol/quinone metabolism; 1,4-dihydroxy-2-naphthoate biosynthesis; 1,4-dihydroxy-2-naphthoate from chorismate: step 3/7. It functions in the pathway quinol/quinone metabolism; menaquinone biosynthesis. Functionally, catalyzes a proton abstraction reaction that results in 2,5-elimination of pyruvate from 2-succinyl-5-enolpyruvyl-6-hydroxy-3-cyclohexene-1-carboxylate (SEPHCHC) and the formation of 2-succinyl-6-hydroxy-2,4-cyclohexadiene-1-carboxylate (SHCHC). The protein is 2-succinyl-6-hydroxy-2,4-cyclohexadiene-1-carboxylate synthase of Citrobacter koseri (strain ATCC BAA-895 / CDC 4225-83 / SGSC4696).